An 811-amino-acid polypeptide reads, in one-letter code: Glycerol-3-phosphate acyltransferase (811 aa).

Positions histidine 303–aspartate 308 match the HXXXXD motif motif.

Belongs to the GPAT/DAPAT family.

Its subcellular location is the cell inner membrane. It carries out the reaction sn-glycerol 3-phosphate + an acyl-CoA = a 1-acyl-sn-glycero-3-phosphate + CoA. The protein operates within phospholipid metabolism; CDP-diacylglycerol biosynthesis; CDP-diacylglycerol from sn-glycerol 3-phosphate: step 1/3. In Haemophilus ducreyi (strain 35000HP / ATCC 700724), this protein is Glycerol-3-phosphate acyltransferase.